The following is a 234-amino-acid chain: Mannose/glucose-specific lectin Cramoll (234 aa).

Mn(2+) contacts are provided by Glu-8 and Asp-10. Ca(2+) contacts are provided by Asp-10, Tyr-12, Asn-14, and Asp-19. Residue Tyr-12 coordinates a carbohydrate. 3 residues coordinate Mn(2+): Asp-19, His-24, and Ser-34. An a carbohydrate-binding site is contributed by 99 to 100 (LY). Asp-205 contacts Ca(2+). Arg-225 is an a carbohydrate binding site.

It belongs to the leguminous lectin family. Homotetramer. In terms of processing, the alpha and beta chains are produced by partial proteolytic processing of the lectin precursor by an asparaginyl endopeptidase.

Glucose/D-mannose specific lectin. The chain is Mannose/glucose-specific lectin Cramoll from Cratylia mollis (Camaratu bean).